Consider the following 256-residue polypeptide: Anamorsin homolog (256 aa).

Residues 1 to 136 (MNSLSLELNK…DTNESSTINI (136 aa)) are N-terminal SAM-like domain. The segment at 126-148 (WDTNESSTINIPSTSSNNPWASI) is disordered. The span at 131-144 (SSTINIPSTSSNNP) shows a compositional bias: low complexity. Positions 137 to 166 (PSTSSNNPWASIEGGDRINENDLVSENDKT) are linker. [2Fe-2S] cluster is bound by residues Cys-176, Cys-185, Cys-188, and Cys-190. A fe-S binding site A region spans residues 176 to 190 (CEVGKTKKACKNCTC). 4 residues coordinate [4Fe-4S] cluster: Cys-217, Cys-220, Cys-228, and Cys-231. 2 short sequence motifs (cx2C motif) span residues 217–220 (CGNC) and 228–231 (CGGC). The fe-S binding site B stretch occupies residues 217–231 (CGNCSLGDAFRCGGC).

It belongs to the anamorsin family. As to quaternary structure, monomer. It depends on [2Fe-2S] cluster as a cofactor. Requires [4Fe-4S] cluster as cofactor.

The protein resides in the cytoplasm. It is found in the mitochondrion intermembrane space. Its function is as follows. Component of the cytosolic iron-sulfur (Fe-S) protein assembly (CIA) machinery. Required for the maturation of extramitochondrial Fe-S proteins. Part of an electron transfer chain functioning in an early step of cytosolic Fe-S biogenesis, facilitating the de novo assembly of a [4Fe-4S] cluster on the cytosolic Fe-S scaffold complex. Electrons are transferred from NADPH via a FAD- and FMN-containing diflavin oxidoreductase. Together with the diflavin oxidoreductase, also required for the assembly of the diferric tyrosyl radical cofactor of ribonucleotide reductase (RNR), probably by providing electrons for reduction during radical cofactor maturation in the catalytic small subunit. In Dictyostelium discoideum (Social amoeba), this protein is Anamorsin homolog (rsc43).